Here is a 691-residue protein sequence, read N- to C-terminus: Two-component response regulator ORR21 (691 aa).

Residues 17-132 form the Response regulatory domain; it reads KVLVVDDDPT…ELKNIWQHVI (116 aa). Asp-68 carries the 4-aspartylphosphate modification. Basic and acidic residues predominate over residues 139-155; sequence NKEHEHSGSLDDTDRTR. Disordered stretches follow at residues 139–204 and 616–647; these read NKEH…KKPR and SHPGSSSSSFQSSNVALGKLPDQGRGKNHGFV. The segment at residues 199–258 is a DNA-binding region (myb-like GARP); it reads TSKKPRVVWSVELHQQFVNAVNHLGIDKAVPKKILELMNVPGLTRENVASHLQKFRLYLK. The segment covering 616 to 628 has biased composition (low complexity); sequence SHPGSSSSSFQSS.

It belongs to the ARR family. Type-B subfamily. Two-component system major event consists of a His-to-Asp phosphorelay between a sensor histidine kinase (HK) and a response regulator (RR). In plants, the His-to-Asp phosphorelay involves an additional intermediate named Histidine-containing phosphotransfer protein (HPt). This multistep phosphorelay consists of a His-Asp-His-Asp sequential transfer of a phosphate group between first a His and an Asp of the HK protein, followed by the transfer to a conserved His of the HPt protein and finally the transfer to an Asp in the receiver domain of the RR protein.

It localises to the nucleus. Functionally, transcriptional activator that binds specific DNA sequence. Functions as a response regulator involved in His-to-Asp phosphorelay signal transduction system. Phosphorylation of the Asp residue in the receiver domain activates the ability of the protein to promote the transcription of target genes. May directly activate some type-A response regulators in response to cytokinins. In Oryza sativa subsp. indica (Rice), this protein is Two-component response regulator ORR21.